A 122-amino-acid chain; its full sequence is MIQVESMLEVADNSGARRVQCIKVLGGSHRRYASVGDIIKVTVKEAIPRGRVKKGDVMNAVVVRTKKGVRRPDGSVLRFDDNAAVLLNQNKAPIATRIFGPVTRELRGDQFMKIVSLAPEVL.

This sequence belongs to the universal ribosomal protein uL14 family. In terms of assembly, part of the 50S ribosomal subunit. Forms a cluster with proteins L3 and L19. In the 70S ribosome, L14 and L19 interact and together make contacts with the 16S rRNA in bridges B5 and B8.

Its function is as follows. Binds to 23S rRNA. Forms part of two intersubunit bridges in the 70S ribosome. In Psychrobacter arcticus (strain DSM 17307 / VKM B-2377 / 273-4), this protein is Large ribosomal subunit protein uL14.